A 323-amino-acid chain; its full sequence is Viral cathepsin (323 aa).

The N-terminal stretch at 1 to 16 is a signal peptide; the sequence is MNKILFYLFVYAVVKS. Positions 17–112 are cleaved as a propeptide — activation peptide; it reads AAYDPLKAPN…ILLDQPPGKG (96 aa). Disulfide bonds link Cys133-Cys174, Cys167-Cys207, and Cys262-Cys310. The active site involves Cys136. N-linked (GlcNAc...) asparagine; by host glycosylation is present at Asn158. Active-site residues include His269 and Asn289.

This sequence belongs to the peptidase C1 family. In terms of processing, synthesized as an inactive proenzyme and activated by proteolytic removal of the inhibitory propeptide.

It catalyses the reaction Endopeptidase of broad specificity, hydrolyzing substrates of both cathepsin L and cathepsin B.. Its function is as follows. Cysteine protease that plays an essential role in host liquefaction to facilitate horizontal transmission of the virus. May participate in the degradation of foreign protein expressed by the baculovirus system. The chain is Viral cathepsin (VCATH) from Bombyx mori (Silk moth).